A 95-amino-acid polypeptide reads, in one-letter code: Small ribosomal subunit protein bS6 (95 aa).

The protein belongs to the bacterial ribosomal protein bS6 family.

Functionally, binds together with bS18 to 16S ribosomal RNA. The protein is Small ribosomal subunit protein bS6 (rpsF) of Halalkalibacterium halodurans (strain ATCC BAA-125 / DSM 18197 / FERM 7344 / JCM 9153 / C-125) (Bacillus halodurans).